A 134-amino-acid polypeptide reads, in one-letter code: Small ribosomal subunit protein uS8c (134 aa).

This sequence belongs to the universal ribosomal protein uS8 family. As to quaternary structure, part of the 30S ribosomal subunit.

The protein resides in the plastid. The protein localises to the chloroplast. In terms of biological role, one of the primary rRNA binding proteins, it binds directly to 16S rRNA central domain where it helps coordinate assembly of the platform of the 30S subunit. This chain is Small ribosomal subunit protein uS8c (rps8), found in Arabidopsis thaliana (Mouse-ear cress).